Here is a 360-residue protein sequence, read N- to C-terminus: Phenylalanine--tRNA ligase alpha subunit (360 aa).

Mg(2+) is bound at residue Glu-260.

The protein belongs to the class-II aminoacyl-tRNA synthetase family. Phe-tRNA synthetase alpha subunit type 1 subfamily. As to quaternary structure, tetramer of two alpha and two beta subunits. The cofactor is Mg(2+).

It is found in the cytoplasm. It carries out the reaction tRNA(Phe) + L-phenylalanine + ATP = L-phenylalanyl-tRNA(Phe) + AMP + diphosphate + H(+). In Sinorhizobium fredii (strain NBRC 101917 / NGR234), this protein is Phenylalanine--tRNA ligase alpha subunit.